Consider the following 113-residue polypeptide: Probable mesentericin-Y105 immunity protein (113 aa).

The protein belongs to the immunity protein EntA family.

Its function is as follows. Imparts immunity to mesentericin-Y105 to naturally sensitive host strains. The chain is Probable mesentericin-Y105 immunity protein (mesI) from Leuconostoc mesenteroides.